The following is a 360-amino-acid chain: Mannose-1-phosphate guanylyltransferase catalytic subunit beta (360 aa).

The substrate-binding domain stretch occupies residues K2–P222. D110 contributes to the GDP-alpha-D-mannose binding site. D110 contributes to the Mg(2+) binding site. The active site involves K162. GDP-alpha-D-mannose is bound at residue D218. Position 218 (D218) interacts with Mg(2+). The segment at C245–M360 is hexapeptide repeat domain.

It belongs to the transferase hexapeptide repeat family. As to quaternary structure, component of the GMPPA-GMPPB mannose-1-phosphate guanylyltransferase complex composed of 4 GMPPA subunits and 8 GMPPB subunits; the complex is organized into three layers, a central layer made up of 2 GMPPA dimers sandwiched between two layers each made up of 2 GMPPB dimers. GMPPB catalytic activity is reduced when part of the complex and binding of GDP-alpha-D-Mannose by GMPPA induces allosteric feedback inhibition of GMPPB. Mg(2+) is required as a cofactor. In terms of tissue distribution, expressed in the liver (at protein level).

Its subcellular location is the cytoplasm. It catalyses the reaction alpha-D-mannose 1-phosphate + GTP + H(+) = GDP-alpha-D-mannose + diphosphate. It functions in the pathway nucleotide-sugar biosynthesis; GDP-alpha-D-mannose biosynthesis; GDP-alpha-D-mannose from alpha-D-mannose 1-phosphate (GTP route): step 1/1. With respect to regulation, enzyme activity is reduced by incorporation into the GMPPA-GMPPB mannose-1-phosphate guanylyltransferase complex. Allosterically inhibited, when part of the GMPPA-GMPPB complex, by GDP-alpha-D-mannose binding to GMPPA. Its function is as follows. Catalytic subunit of the GMPPA-GMPPB mannose-1-phosphate guanylyltransferase complex. Catalyzes the formation of GDP-mannose, an essential precursor of glycan moieties of glycoproteins and glycolipids. Can catalyze the reverse reaction in vitro. Together with GMPPA regulates GDP-alpha-D-mannose levels. This is Mannose-1-phosphate guanylyltransferase catalytic subunit beta from Sus scrofa (Pig).